We begin with the raw amino-acid sequence, 88 residues long: MSGSGSGSGAGHGGGSGGSIREAGGSLGMMGATREEEYFRRQQKDQLDNLKKKLEADMTQSQQEIRDHEKVLEQHQQRLKEIEKGHGT.

Positions 1–18 (MSGSGSGSGAGHGGGSGG) are enriched in gly residues. Residues 1 to 41 (MSGSGSGSGAGHGGGSGGSIREAGGSLGMMGATREEEYFRR) form a disordered region. Residues 39–87 (FRRQQKDQLDNLKKKLEADMTQSQQEIRDHEKVLEQHQQRLKEIEKGHG) adopt a coiled-coil conformation.

Belongs to the ATPase inhibitor family. In terms of processing, does not seem to include a transit peptide.

The protein resides in the mitochondrion. Functionally, thought to be a regulatory component of the ATP-synthesizing complex in the mitochondria. This chain is ATPase inhibitor mai-1, mitochondrial (mai-1), found in Caenorhabditis elegans.